The sequence spans 161 residues: Transcription elongation factor GreB (161 aa).

Belongs to the GreA/GreB family. GreB subfamily.

Functionally, necessary for efficient RNA polymerase transcription elongation past template-encoded arresting sites. The arresting sites in DNA have the property of trapping a certain fraction of elongating RNA polymerases that pass through, resulting in locked ternary complexes. Cleavage of the nascent transcript by cleavage factors such as GreA or GreB allows the resumption of elongation from the new 3'terminus. GreB releases sequences of up to 9 nucleotides in length. The sequence is that of Transcription elongation factor GreB from Vibrio cholerae serotype O1 (strain ATCC 39315 / El Tor Inaba N16961).